Consider the following 427-residue polypeptide: Kynureninase (427 aa).

Residues Thr-104, Thr-105, 132–135 (FPSD), Asp-213, His-216, and Tyr-238 each bind pyridoxal 5'-phosphate. N6-(pyridoxal phosphate)lysine is present on Lys-239. The pyridoxal 5'-phosphate site is built by Trp-267 and Thr-295.

Belongs to the kynureninase family. Homodimer. The cofactor is pyridoxal 5'-phosphate.

The catalysed reaction is L-kynurenine + H2O = anthranilate + L-alanine + H(+). The enzyme catalyses 3-hydroxy-L-kynurenine + H2O = 3-hydroxyanthranilate + L-alanine + H(+). It participates in amino-acid degradation; L-kynurenine degradation; L-alanine and anthranilate from L-kynurenine: step 1/1. It functions in the pathway cofactor biosynthesis; NAD(+) biosynthesis; quinolinate from L-kynurenine: step 2/3. Functionally, catalyzes the cleavage of L-kynurenine (L-Kyn) and L-3-hydroxykynurenine (L-3OHKyn) into anthranilic acid (AA) and 3-hydroxyanthranilic acid (3-OHAA), respectively. This Shouchella clausii (strain KSM-K16) (Alkalihalobacillus clausii) protein is Kynureninase.